A 388-amino-acid polypeptide reads, in one-letter code: Na(+)/H(+) antiporter NhaA (388 aa).

11 consecutive transmembrane segments (helical) span residues 14-34 (GGII…MGAT), 59-79 (MLLW…GLEV), 95-115 (AFPV…YLAF), 125-145 (GWAI…ALLG), 154-174 (IFLM…IALF), 179-199 (LSIV…LLNL), 219-239 (VLKS…FIPL), 254-274 (VLHP…NAGV), 292-312 (IIAG…WLAL), 328-348 (IMAV…IASL), and 360-380 (WAKL…YSWL).

It belongs to the NhaA Na(+)/H(+) (TC 2.A.33) antiporter family.

The protein resides in the cell inner membrane. It carries out the reaction Na(+)(in) + 2 H(+)(out) = Na(+)(out) + 2 H(+)(in). Its function is as follows. Na(+)/H(+) antiporter that extrudes sodium in exchange for external protons. The protein is Na(+)/H(+) antiporter NhaA of Salmonella choleraesuis (strain SC-B67).